We begin with the raw amino-acid sequence, 1136 residues long: Protein stu-1 (1136 aa).

HEAT repeat units follow at residues 95 to 133 (TLPV…ERSV) and 167 to 205 (YVPT…KSDL). Disordered regions lie at residues 524 to 554 (KDPH…MGAP), 567 to 794 (RAMA…QPQI), and 821 to 884 (TAGQ…LLDS). The segment covering 595–622 (VSSTSQASVASASTASAVPAPTKSAFGA) has biased composition (low complexity). Over residues 659–668 (PAEPASPPSK) the composition is skewed to pro residues. Polar residues predominate over residues 673-683 (TVTSPKTQTLV). Residues 701-716 (SSESGIPIPVSGISSP) show a composition bias toward low complexity. Polar residues-rich tracts occupy residues 777 to 793 (LPTQ…QQPQ) and 822 to 833 (AGQTQPQSTYTS).

Belongs to the CLASP family. Interacts with microtubules.

The protein resides in the nucleus. It localises to the cytoplasm. The protein localises to the cytoskeleton. It is found in the spindle. Microtubule binding protein that promotes the stabilization of dynamic microtubules. Required for mitotic spindle formation. This is Protein stu-1 (stu-1) from Neurospora crassa (strain ATCC 24698 / 74-OR23-1A / CBS 708.71 / DSM 1257 / FGSC 987).